We begin with the raw amino-acid sequence, 79 residues long: Sulfur carrier protein TusA (79 aa).

Catalysis depends on Cys17, which acts as the Cysteine persulfide intermediate.

The protein belongs to the sulfur carrier protein TusA family.

Its subcellular location is the cytoplasm. Sulfur carrier protein which probably makes part of a sulfur-relay system. This chain is Sulfur carrier protein TusA, found in Pasteurella multocida (strain Pm70).